A 177-amino-acid chain; its full sequence is Protein FATTY ACID EXPORT 4, chloroplastic (177 aa).

Residues 1 to 63 (MWSLALTLPS…AELSELAPVV (63 aa)) constitute a chloroplast transit peptide. 3 helical membrane passes run 85–105 (KGSL…YFLT), 111–131 (RVLG…VFGF), and 140–160 (VPAG…VMAY).

Belongs to the TMEM14 family.

It localises to the plastid. The protein resides in the chloroplast membrane. In terms of biological role, may be involved in free fatty acids export from the plastids. In Arabidopsis thaliana (Mouse-ear cress), this protein is Protein FATTY ACID EXPORT 4, chloroplastic.